The sequence spans 337 residues: WRKY transcription factor 23 (337 aa).

Positions 100–160 are disordered; it reads INPPATPNSS…KNNQKRQREA (61 aa). Residues 106-118 are compositionally biased toward low complexity; it reads PNSSSISSASSEA. Residues 142-155 show a composition bias toward basic residues; sequence HTKKQLKAKKNNQK. The WRKY DNA-binding region spans 168–233; it reads SEVDHLEDGY…YEGQHTHISP (66 aa).

It belongs to the WRKY group II-c family.

The protein localises to the nucleus. Transcription factor. Interacts specifically with the W box (5'-(T)TGAC[CT]-3'), a frequently occurring elicitor-responsive cis-acting element. The sequence is that of WRKY transcription factor 23 (WRKY23) from Arabidopsis thaliana (Mouse-ear cress).